A 282-amino-acid chain; its full sequence is Pantothenate synthetase (282 aa).

Methionine 30–histidine 37 is an ATP binding site. The active-site Proton donor is the histidine 37. Glutamine 60 contributes to the (R)-pantoate binding site. Glutamine 60 serves as a coordination point for beta-alanine. Glycine 146–aspartate 149 is a binding site for ATP. (R)-pantoate is bound at residue glutamine 152. ATP-binding positions include isoleucine 175 and lysine 183 to arginine 186.

It belongs to the pantothenate synthetase family. Homodimer.

The protein resides in the cytoplasm. It carries out the reaction (R)-pantoate + beta-alanine + ATP = (R)-pantothenate + AMP + diphosphate + H(+). It participates in cofactor biosynthesis; (R)-pantothenate biosynthesis; (R)-pantothenate from (R)-pantoate and beta-alanine: step 1/1. Its function is as follows. Catalyzes the condensation of pantoate with beta-alanine in an ATP-dependent reaction via a pantoyl-adenylate intermediate. This is Pantothenate synthetase from Campylobacter jejuni subsp. doylei (strain ATCC BAA-1458 / RM4099 / 269.97).